The following is a 510-amino-acid chain: NAD(P)H-quinone oxidoreductase subunit 2 B, chloroplastic (510 aa).

13 helical membrane-spanning segments follow: residues 24–44 (LLLF…GLIL), 57–77 (IPWL…ALLF), 99–119 (IFQF…VEYI), 124–144 (MAIT…MFLC), 149–169 (LITI…LSGY), 183–203 (YLLM…WLYG), 227–247 (PGIS…LSPA), 295–315 (WHLH…LIAI), 323–343 (MLAY…IVGD), 347–367 (GYAS…GTFA), 395–415 (ALSL…AGFF), 418–438 (LHLF…IGLL), and 484–504 (MIVC…IIAI).

It belongs to the complex I subunit 2 family. In terms of assembly, NDH is composed of at least 16 different subunits, 5 of which are encoded in the nucleus.

The protein localises to the plastid. It localises to the chloroplast thylakoid membrane. It carries out the reaction a plastoquinone + NADH + (n+1) H(+)(in) = a plastoquinol + NAD(+) + n H(+)(out). The catalysed reaction is a plastoquinone + NADPH + (n+1) H(+)(in) = a plastoquinol + NADP(+) + n H(+)(out). NDH shuttles electrons from NAD(P)H:plastoquinone, via FMN and iron-sulfur (Fe-S) centers, to quinones in the photosynthetic chain and possibly in a chloroplast respiratory chain. The immediate electron acceptor for the enzyme in this species is believed to be plastoquinone. Couples the redox reaction to proton translocation, and thus conserves the redox energy in a proton gradient. The sequence is that of NAD(P)H-quinone oxidoreductase subunit 2 B, chloroplastic from Buxus microphylla (Littleleaf boxwood).